A 354-amino-acid polypeptide reads, in one-letter code: Uroporphyrinogen decarboxylase (354 aa).

Substrate is bound by residues 25–29 (RQAGR), phenylalanine 44, aspartate 75, tyrosine 152, threonine 207, and histidine 330.

Belongs to the uroporphyrinogen decarboxylase family. Homodimer.

It is found in the cytoplasm. The catalysed reaction is uroporphyrinogen III + 4 H(+) = coproporphyrinogen III + 4 CO2. Its pathway is porphyrin-containing compound metabolism; protoporphyrin-IX biosynthesis; coproporphyrinogen-III from 5-aminolevulinate: step 4/4. Its function is as follows. Catalyzes the decarboxylation of four acetate groups of uroporphyrinogen-III to yield coproporphyrinogen-III. The sequence is that of Uroporphyrinogen decarboxylase from Xylella fastidiosa (strain Temecula1 / ATCC 700964).